A 51-amino-acid chain; its full sequence is Cytoplasmic FMR1-interacting protein 1 (51 aa).

This sequence belongs to the CYFIP family. Component of the WAVE1 complex composed of ABI2, CYFIP1 or CYFIP2, BRK1, NCKAP1 and WASF1/WAVE1. Within the complex, a heterodimer containing NCKAP1 and CYFIP1 interacts with a heterotrimer formed by WAVE1, ABI2 and BRK1. Component of the CYFIP1-EIF4E-FMR1 complex which is composed of CYFIP, EIF4E and FMR1. Interacts with FMR1 but does not bind to related proteins FXR1 or FXR2. Interaction with EIF4E stimulates FMR1 binding. Component of the WAVE2 complex composed of ABI1, CYFIP1/SRA1, NCKAP1/NAP1 (NCKAP1l/HEM1 in hematopoietic cells) and WASF2/WAVE2. Interacts with the active GTP-bound form of RAC1. Interacts through its C-terminus with the C-terminus of DPYSL2/CRMP2 which is necessary for DPYSL2-induced axon outgrowth. Interacts with NYAP1, NYAP2 and MYO16. Interacts with TMEM108 (via N-terminus); the interaction associates TMEM108 with the WAVE1 complex.

It localises to the cytoplasm. It is found in the perinuclear region. The protein resides in the cell projection. The protein localises to the lamellipodium. Its subcellular location is the ruffle. It localises to the synapse. It is found in the synaptosome. In terms of biological role, component of the CYFIP1-EIF4E-FMR1 complex which binds to the mRNA cap and mediates translational repression. In the CYFIP1-EIF4E-FMR1 complex this subunit is an adapter between EIF4E and FMR1. Promotes the translation repression activity of FMR1 in brain probably by mediating its association with EIF4E and mRNA. Regulates formation of membrane ruffles and lamellipodia. Plays a role in axon outgrowth. Binds to F-actin but not to RNA. Part of the WAVE complex that regulates actin filament reorganization via its interaction with the Arp2/3 complex. Actin remodeling activity is regulated by RAC1. Regulator of epithelial morphogenesis. As component of the WAVE1 complex, required for BDNF-NTRK2 endocytic trafficking and signaling from early endosomes. This is Cytoplasmic FMR1-interacting protein 1 from Bos taurus (Bovine).